Here is a 214-residue protein sequence, read N- to C-terminus: Holliday junction branch migration complex subunit RuvA (214 aa).

The tract at residues 1–63 (MISSLRGTVL…EDSLTLFGFP (63 aa)) is domain I. Residues 64–139 (GPDELRAFEL…KLFVTQPRAR (76 aa)) form a domain II region. The tract at residues 139 to 143 (RSATS) is flexible linker. A domain III region spans residues 144–214 (AASTVTADVV…AAPTGQAADR (71 aa)).

Belongs to the RuvA family. Homotetramer. Forms an RuvA(8)-RuvB(12)-Holliday junction (HJ) complex. HJ DNA is sandwiched between 2 RuvA tetramers; dsDNA enters through RuvA and exits via RuvB. An RuvB hexamer assembles on each DNA strand where it exits the tetramer. Each RuvB hexamer is contacted by two RuvA subunits (via domain III) on 2 adjacent RuvB subunits; this complex drives branch migration. In the full resolvosome a probable DNA-RuvA(4)-RuvB(12)-RuvC(2) complex forms which resolves the HJ.

Its subcellular location is the cytoplasm. Functionally, the RuvA-RuvB-RuvC complex processes Holliday junction (HJ) DNA during genetic recombination and DNA repair, while the RuvA-RuvB complex plays an important role in the rescue of blocked DNA replication forks via replication fork reversal (RFR). RuvA specifically binds to HJ cruciform DNA, conferring on it an open structure. The RuvB hexamer acts as an ATP-dependent pump, pulling dsDNA into and through the RuvAB complex. HJ branch migration allows RuvC to scan DNA until it finds its consensus sequence, where it cleaves and resolves the cruciform DNA. This is Holliday junction branch migration complex subunit RuvA from Clavibacter michiganensis subsp. michiganensis (strain NCPPB 382).